The sequence spans 143 residues: uncharacterized protein (143 aa).

Residues 13–143 form a disordered region; it reads SLQFPHHRPG…QDAAHQCRIQ (131 aa). Positions 17 to 31 are enriched in basic residues; sequence PHHRPGLRRHRKNTT. Composition is skewed to basic and acidic residues over residues 35–48, 84–96, and 112–133; these read AAVD…RGDA, DGRE…AEEK, and EKQH…DHAG. Residues 134-143 are compositionally biased toward low complexity; the sequence is QDAAHQCRIQ.

This is an uncharacterized protein from Homo sapiens (Human).